The chain runs to 118 residues: Probable small nuclear ribonucleoprotein Sm D2 (118 aa).

The region spanning 29–115 (LSILTNSVKN…VILVVKNPLA (87 aa)) is the Sm domain.

It belongs to the snRNP core protein family.

It localises to the nucleus. The protein localises to the cytoplasm. Its subcellular location is the cytosol. Its function is as follows. Plays a role in pre-mRNA splicing as a core component of the spliceosomal U1, U2, U4 and U5 small nuclear ribonucleoproteins (snRNPs), the building blocks of the spliceosome. In Caenorhabditis elegans, this protein is Probable small nuclear ribonucleoprotein Sm D2 (snr-4).